We begin with the raw amino-acid sequence, 325 residues long: Glutarate 2-hydroxylase (325 aa).

3 residues coordinate Fe cation: His-160, Asp-162, and His-292.

It belongs to the glutarate hydroxylase family. Homotetramer. Fe(2+) serves as cofactor.

It catalyses the reaction glutarate + 2-oxoglutarate + O2 = (S)-2-hydroxyglutarate + succinate + CO2. Its pathway is amino-acid degradation. In terms of biological role, acts as an alpha-ketoglutarate-dependent dioxygenase catalyzing hydroxylation of glutarate (GA) to L-2-hydroxyglutarate (L2HG). Functions in a L-lysine degradation pathway that proceeds via cadaverine, glutarate and L-2-hydroxyglutarate. The sequence is that of Glutarate 2-hydroxylase from Shigella boydii serotype 18 (strain CDC 3083-94 / BS512).